Consider the following 266-residue polypeptide: Putative carbamate hydrolase RutD (266 aa).

The region spanning 14-115 (PVVVLISGLG…TVLVSVNGWL (102 aa)) is the AB hydrolase-1 domain.

Belongs to the AB hydrolase superfamily. Hydrolase RutD family.

It catalyses the reaction carbamate + 2 H(+) = NH4(+) + CO2. Functionally, involved in pyrimidine catabolism. May facilitate the hydrolysis of carbamate, a reaction that can also occur spontaneously. The sequence is that of Putative carbamate hydrolase RutD from Escherichia coli O9:H4 (strain HS).